Consider the following 128-residue polypeptide: Fluoride-specific ion channel FluC (128 aa).

Helical transmembrane passes span 5-25 (ALVA…SMVI), 32-52 (TFPW…GLFA), 70-90 (FFMV…LQTL), and 106-126 (VGSV…ATII). Na(+) is bound by residues G77 and T80.

It belongs to the fluoride channel Fluc/FEX (TC 1.A.43) family.

Its subcellular location is the cell inner membrane. The enzyme catalyses fluoride(in) = fluoride(out). Na(+) is not transported, but it plays an essential structural role and its presence is essential for fluoride channel function. Fluoride-specific ion channel. Important for reducing fluoride concentration in the cell, thus reducing its toxicity. In Paramagnetospirillum magneticum (strain ATCC 700264 / AMB-1) (Magnetospirillum magneticum), this protein is Fluoride-specific ion channel FluC.